A 437-amino-acid polypeptide reads, in one-letter code: Probable indole-3-pyruvate monooxygenase YUCCA3 (437 aa).

41 to 46 (GAGPSG) lines the FAD pocket. 212–217 (GCGNSG) contacts NADP(+).

The protein belongs to the FMO family. FAD is required as a cofactor.

It carries out the reaction indole-3-pyruvate + NADPH + O2 + H(+) = (indol-3-yl)acetate + CO2 + NADP(+) + H2O. It participates in plant hormone metabolism; auxin biosynthesis. In terms of biological role, involved in auxin biosynthesis. Belongs to the set of redundant YUCCA genes probably responsible for auxin biosynthesis in roots. This chain is Probable indole-3-pyruvate monooxygenase YUCCA3 (YUC3), found in Arabidopsis thaliana (Mouse-ear cress).